The following is a 545-amino-acid chain: Chaperonin GroEL (545 aa).

ATP is bound by residues 30–33, lysine 51, 87–91, glycine 415, and aspartate 496; these read TLGP and DGTTT. Positions 526 to 545 are disordered; it reads PEPKAPAGGMPDMGGMGGMM. The segment covering 536–545 has biased composition (gly residues); the sequence is PDMGGMGGMM.

The protein belongs to the chaperonin (HSP60) family. As to quaternary structure, forms a cylinder of 14 subunits composed of two heptameric rings stacked back-to-back. Interacts with the co-chaperonin GroES.

It localises to the cytoplasm. The catalysed reaction is ATP + H2O + a folded polypeptide = ADP + phosphate + an unfolded polypeptide.. Its function is as follows. Together with its co-chaperonin GroES, plays an essential role in assisting protein folding. The GroEL-GroES system forms a nano-cage that allows encapsulation of the non-native substrate proteins and provides a physical environment optimized to promote and accelerate protein folding. The protein is Chaperonin GroEL of Paracoccus denitrificans (strain Pd 1222).